We begin with the raw amino-acid sequence, 91 residues long: Small ribosomal subunit protein uS19 (91 aa).

A disordered region spans residues 1 to 32; that stretch reads MPRSIKKGPFIDEHLDRKVQSAQASNSRRPIK. Basic and acidic residues predominate over residues 9–19; the sequence is PFIDEHLDRKV.

This sequence belongs to the universal ribosomal protein uS19 family.

In terms of biological role, protein S19 forms a complex with S13 that binds strongly to the 16S ribosomal RNA. The protein is Small ribosomal subunit protein uS19 of Acidithiobacillus ferrooxidans (strain ATCC 53993 / BNL-5-31) (Leptospirillum ferrooxidans (ATCC 53993)).